We begin with the raw amino-acid sequence, 639 residues long: Bone morphogenetic protein 1 homolog (639 aa).

The first 23 residues, 1-23 (MDLLYYMTVSLLGFILSLTTFIG), serve as a signal peptide directing secretion. The propeptide occupies 24-109 (ETTRALSDDV…RAVTARPERR (86 aa)). The Peptidase M12A domain occupies 100–305 (RAVTARPERR…IQANLLYKCP (206 aa)). Asn122 and Asn140 each carry an N-linked (GlcNAc...) asparagine glycan. Intrachain disulfides connect Cys143/Cys304, Cys167/Cys189, Cys169/Cys170, Cys307/Cys333, Cys360/Cys382, and Cys420/Cys446. Position 197 (His197) interacts with Zn(2+). Glu198 is a catalytic residue. Zn(2+) contacts are provided by His201 and His207. CUB domains are found at residues 307–419 (CGRT…YEAI) and 420–531 (CGGH…DFFK). Asn317 carries an N-linked (GlcNAc...) asparagine glycan. Asn455 carries N-linked (GlcNAc...) asparagine glycosylation. Intrachain disulfides connect Cys473/Cys495, Cys536/Cys548, Cys544/Cys557, and Cys559/Cys572. One can recognise an EGF-like; calcium-binding domain in the interval 532 to 573 (EKDECAQPDQGGCMDVCVNTIGSYRCDCRPGYELSSDGRRCE).

Zn(2+) serves as cofactor. In terms of tissue distribution, ectodermal and primary mesenchyme cells in hatched blastula.

The chain is Bone morphogenetic protein 1 homolog from Strongylocentrotus purpuratus (Purple sea urchin).